An 88-amino-acid polypeptide reads, in one-letter code: Sec-independent protein translocase protein TatA (88 aa).

A helical membrane pass occupies residues 1-21 (MGGISIWQLLIIALIVVLLFG). Positions 43–88 (MSSEEDKKALEDAEAAKPVQTAQTVQSAQPTQQATEKKPESNKEQA) are disordered. Over residues 46-57 (EEDKKALEDAEA) the composition is skewed to basic and acidic residues. Polar residues predominate over residues 62–76 (QTAQTVQSAQPTQQA). Basic and acidic residues predominate over residues 77–88 (TEKKPESNKEQA).

Belongs to the TatA/E family. As to quaternary structure, the Tat system comprises two distinct complexes: a TatABC complex, containing multiple copies of TatA, TatB and TatC subunits, and a separate TatA complex, containing only TatA subunits. Substrates initially bind to the TatABC complex, which probably triggers association of the separate TatA complex to form the active translocon.

It localises to the cell inner membrane. Its function is as follows. Part of the twin-arginine translocation (Tat) system that transports large folded proteins containing a characteristic twin-arginine motif in their signal peptide across membranes. TatA could form the protein-conducting channel of the Tat system. In Shewanella oneidensis (strain ATCC 700550 / JCM 31522 / CIP 106686 / LMG 19005 / NCIMB 14063 / MR-1), this protein is Sec-independent protein translocase protein TatA.